We begin with the raw amino-acid sequence, 122 residues long: Flagellar protein FliT (122 aa).

The interval 1 to 50 (MTSTVEFINRWQRIALLSQSLLELAQRGEWDLLLQQEVSYLQRIETVMEK) is required for homodimerization. The interval 60–98 (IQDMVAGYIKQTLDNEQLLKGLLQQRLDELSSLIGQSTR) is fliD binding.

The protein belongs to the FliT family. Homodimer. Interacts with FliD and FlhC.

Its subcellular location is the cytoplasm. The protein resides in the cytosol. Functionally, dual-function protein that regulates the transcription of class 2 flagellar operons and that also acts as an export chaperone for the filament-capping protein FliD. As a transcriptional regulator, acts as an anti-FlhDC factor; it directly binds FlhC, thus inhibiting the binding of the FlhC/FlhD complex to class 2 promoters, resulting in decreased expression of class 2 flagellar operons. As a chaperone, effects FliD transition to the membrane by preventing its premature polymerization, and by directing it to the export apparatus. The sequence is that of Flagellar protein FliT from Salmonella paratyphi A (strain AKU_12601).